The chain runs to 274 residues: Large ribosomal subunit protein uL2 (274 aa).

2 disordered regions span residues 28–54 (APYA…TRHI) and 223–265 (VAMN…KRTD). Over residues 39-48 (KSGGRNNNGR) the composition is skewed to low complexity.

This sequence belongs to the universal ribosomal protein uL2 family. As to quaternary structure, part of the 50S ribosomal subunit. Forms a bridge to the 30S subunit in the 70S ribosome.

One of the primary rRNA binding proteins. Required for association of the 30S and 50S subunits to form the 70S ribosome, for tRNA binding and peptide bond formation. It has been suggested to have peptidyltransferase activity; this is somewhat controversial. Makes several contacts with the 16S rRNA in the 70S ribosome. The protein is Large ribosomal subunit protein uL2 of Alteromonas mediterranea (strain DSM 17117 / CIP 110805 / LMG 28347 / Deep ecotype).